Consider the following 1708-residue polypeptide: Clathrin heavy chain 1 (1708 aa).

The globular terminal domain stretch occupies residues 1 to 492 (MAAANAPIAM…VDNDLALKIY (492 aa)). WD40-like repeat regions lie at residues 25-67 (FVTF…RPIT), 68-113 (ADSA…MPEQ), 114-155 (VVFW…ANLA), 156-205 (NNQI…QALE), 206-270 (AHAA…PDFQ), 271-314 (DDFP…ISPD), and 315-343 (PIFL…ATVN). The interval 462–478 (ENWLAEDKLECSEELGD) is binding site for the uncoating ATPase, involved in lattice disassembly. Positions 493 to 536 (IKARATPKVVAAFAERREFDKILIYSKQVGYTPDYLFLLQTILR) are flexible linker. Residues 537-648 (TDPQGAVNFA…RALQHYTELP (112 aa)) are distal segment. Residues 537–1708 (TDPQGAVNFA…AYGMPPMGSY (1172 aa)) form a heavy chain arm region. 7 CHCR repeats span residues 551-697 (QMEG…QIVV), 700-842 (AKEY…PEDF), 847-986 (ILSV…QLID), 993-1138 (LPES…VSEA), 1142-1283 (FIRA…FRLA), 1288-1434 (LNII…DLIN), and 1437-1580 (LNVL…KECF). Residues 653-1708 (VMVNTHAIEP…AYGMPPMGSY (1056 aa)) form a proximal segment region. The interval 1227 to 1536 (AAKIIYAFIS…YIYKKAGRWK (310 aa)) is involved in binding clathrin light chain. Residues 1564–1708 (SEDLLVYFIE…AYGMPPMGSY (145 aa)) are trimerization.

This sequence belongs to the clathrin heavy chain family. In terms of assembly, clathrin triskelions, composed of 3 heavy chains and 3 light chains, are the basic subunits of the clathrin coat.

It localises to the cytoplasmic vesicle membrane. The protein resides in the membrane. It is found in the coated pit. Its function is as follows. Clathrin is the major protein of the polyhedral coat of coated pits and vesicles. This is Clathrin heavy chain 1 from Oryza sativa subsp. japonica (Rice).